The following is a 186-amino-acid chain: Acetyltransferase PA2578 (186 aa).

Positions 12 to 176 (LQLVPFQLGH…NVVLMGLLRQ (165 aa)) constitute an N-acetyltransferase domain. Residues Gln37, 97-99 (IVL), Gly105, Asn137, and 142-144 (HLY) contribute to the CoA site.

Homodimer.

In terms of biological role, catalyzes the transfer of an acetyl group from acetyl coenzyme A (AcCoA) to an acceptor substrate and releases both CoA and the acetylated product. It prefers the antibiotic chloramphenicol. The chain is Acetyltransferase PA2578 from Pseudomonas aeruginosa (strain ATCC 15692 / DSM 22644 / CIP 104116 / JCM 14847 / LMG 12228 / 1C / PRS 101 / PAO1).